The primary structure comprises 173 residues: Inorganic pyrophosphatase (173 aa).

Lys29, Arg43, and Tyr55 together coordinate substrate. 3 residues coordinate Mg(2+): Asp65, Asp70, and Asp102. Tyr141 is a binding site for substrate.

Belongs to the PPase family. In terms of assembly, homohexamer. Requires Mg(2+) as cofactor.

It is found in the cytoplasm. The catalysed reaction is diphosphate + H2O = 2 phosphate + H(+). Its function is as follows. Catalyzes the hydrolysis of inorganic pyrophosphate (PPi) forming two phosphate ions. The sequence is that of Inorganic pyrophosphatase from Rickettsia felis (strain ATCC VR-1525 / URRWXCal2) (Rickettsia azadi).